The following is a 1442-amino-acid chain: ABC transporter G family member 11 (1442 aa).

An ABC transporter 1 domain is found at leucine 125–proline 373. An ABC transmembrane type-2 1 domain is found at leucine 478 to aspartate 718. Transmembrane regions (helical) follow at residues phenylalanine 482–phenylalanine 502, alanine 518–phenylalanine 538, isoleucine 567–leucine 587, glycine 592–phenylalanine 612, asparagine 627–proline 647, and isoleucine 737–isoleucine 757. One can recognise an ABC transporter 2 domain in the interval phenylalanine 808–valine 1052. Residue glycine 844–threonine 851 participates in ATP binding. In terms of domain architecture, ABC transmembrane type-2 2 spans tyrosine 1144 to alanine 1369. A run of 6 helical transmembrane segments spans residues tyrosine 1147–leucine 1167, isoleucine 1181–isoleucine 1201, phenylalanine 1220–phenylalanine 1240, phenylalanine 1259–valine 1279, methionine 1286–valine 1306, and valine 1416–leucine 1436.

The protein belongs to the ABC transporter superfamily. ABCG family. PDR (TC 3.A.1.205) subfamily.

It localises to the membrane. The protein is ABC transporter G family member 11 (abcG11) of Dictyostelium discoideum (Social amoeba).